Reading from the N-terminus, the 138-residue chain is Lutropin subunit beta (138 aa).

The N-terminal stretch at 1–17 is a signal peptide; that stretch reads LQGLLLWLLLSVGGVWA. 6 disulfide bridges follow: cysteine 26–cysteine 74, cysteine 40–cysteine 89, cysteine 43–cysteine 127, cysteine 51–cysteine 105, cysteine 55–cysteine 107, and cysteine 110–cysteine 117. An N-linked (GlcNAc...) asparagine glycan is attached at asparagine 30.

This sequence belongs to the glycoprotein hormones subunit beta family. As to quaternary structure, heterodimer of a common alpha chain and a unique beta chain which confers biological specificity to thyrotropin, lutropin, follitropin and gonadotropin.

It is found in the secreted. Promotes spermatogenesis and ovulation by stimulating the testes and ovaries to synthesize steroids. In Canis lupus familiaris (Dog), this protein is Lutropin subunit beta (LHB).